The sequence spans 328 residues: Flagellar motor switch protein FliM (328 aa).

Residues 1 to 45 (MSDVLSQEEINQLIEALMKGELKEEDLLKEEEEKKVKPYDFKRPS) are interaction with unphosphorylated CheY.

It belongs to the FliM family. As to quaternary structure, interacts (via N-terminus) with unphosphorylated CheY. Interacts (via central domain) with FliG (via central domain or via central domain and C-terminus).

The protein resides in the cell inner membrane. The protein localises to the bacterial flagellum basal body. Functionally, fliM is one of three proteins (FliG, FliN, FliM) that forms the rotor-mounted switch complex (C ring), located at the base of the basal body. This complex interacts with the CheY and CheX chemotaxis proteins, in addition to contacting components of the motor that determine the direction of flagellar rotation. This is Flagellar motor switch protein FliM from Thermotoga maritima (strain ATCC 43589 / DSM 3109 / JCM 10099 / NBRC 100826 / MSB8).